Consider the following 729-residue polypeptide: Subtilisin-like protease SBT4.3 (729 aa).

Residues 1–23 (MAKLSTPLYLICLAFIFTRDVSA) form the signal peptide. Positions 24 to 109 (NDYRQASSVY…VFPSKSHELT (86 aa)) are cleaved as a propeptide — activation peptide. An Inhibitor I9 domain is found at 32–108 (VYIVYMGTLP…SVFPSKSHEL (77 aa)). The N-linked (GlcNAc...) asparagine glycan is linked to N82. One can recognise a Peptidase S8 domain in the interval 113-580 (SWDFVGFGEK…SGQINPTKAS (468 aa)). Residues D139 and H196 each act as charge relay system in the active site. N-linked (GlcNAc...) asparagine glycans are attached at residues N275, N348, N359, and N363. One can recognise a PA domain in the interval 350–436 (TKFPIVYGQN…LGFEDYKSIK (87 aa)). The active-site Charge relay system is the S521. N614, N642, and N656 each carry an N-linked (GlcNAc...) asparagine glycan.

This sequence belongs to the peptidase S8 family. In terms of processing, the C-terminal propeptide is autocleaved.

It is found in the secreted. The chain is Subtilisin-like protease SBT4.3 from Arabidopsis thaliana (Mouse-ear cress).